Consider the following 74-residue polypeptide: Protein kish-B (74 aa).

Positions 1–22 are cleaved as a signal peptide; sequence MTNVYSLDGILVFGLLFVCTCA. At 23–52 the chain is on the extracellular side; that stretch reads YFKKVPRLKTWLLSEKKGVWGVFYKAAVIG. Residues 53–73 form a helical membrane-spanning segment; that stretch reads TRLHAAVAIACIVMAFYVLFI. Position 74 (K74) is a topological domain, cytoplasmic.

This sequence belongs to the KISH family.

It localises to the golgi apparatus membrane. In terms of biological role, involved in the early part of the secretory pathway. In Bos taurus (Bovine), this protein is Protein kish-B (TMEM167B).